A 419-amino-acid chain; its full sequence is Serine hydroxymethyltransferase (419 aa).

(6S)-5,6,7,8-tetrahydrofolate contacts are provided by residues Leu-121 and 125-127 (GHL). Lys-230 bears the N6-(pyridoxal phosphate)lysine mark. Position 355-357 (355-357 (SPF)) interacts with (6S)-5,6,7,8-tetrahydrofolate.

The protein belongs to the SHMT family. Homodimer. The cofactor is pyridoxal 5'-phosphate.

It localises to the cytoplasm. It carries out the reaction (6R)-5,10-methylene-5,6,7,8-tetrahydrofolate + glycine + H2O = (6S)-5,6,7,8-tetrahydrofolate + L-serine. It functions in the pathway one-carbon metabolism; tetrahydrofolate interconversion. The protein operates within amino-acid biosynthesis; glycine biosynthesis; glycine from L-serine: step 1/1. Its function is as follows. Catalyzes the reversible interconversion of serine and glycine with tetrahydrofolate (THF) serving as the one-carbon carrier. This reaction serves as the major source of one-carbon groups required for the biosynthesis of purines, thymidylate, methionine, and other important biomolecules. Also exhibits THF-independent aldolase activity toward beta-hydroxyamino acids, producing glycine and aldehydes, via a retro-aldol mechanism. The polypeptide is Serine hydroxymethyltransferase (Streptococcus equi subsp. zooepidemicus (strain H70)).